The following is a 466-amino-acid chain: Histidine--tRNA ligase (466 aa).

It belongs to the class-II aminoacyl-tRNA synthetase family. Homodimer.

It is found in the cytoplasm. The enzyme catalyses tRNA(His) + L-histidine + ATP = L-histidyl-tRNA(His) + AMP + diphosphate + H(+). The sequence is that of Histidine--tRNA ligase from Bifidobacterium longum subsp. infantis (strain ATCC 15697 / DSM 20088 / JCM 1222 / NCTC 11817 / S12).